The primary structure comprises 48 residues: Large ribosomal subunit protein bL32 (48 aa).

The segment at 1-20 (MAVPDRRVSKTRAAKRRTHY) is disordered. Residues 9–20 (SKTRAAKRRTHY) are compositionally biased toward basic residues.

It belongs to the bacterial ribosomal protein bL32 family.

The chain is Large ribosomal subunit protein bL32 from Helicobacter acinonychis (strain Sheeba).